The following is a 597-amino-acid chain: Protein unc-93 homolog B1 (597 aa).

A disordered region spans residues 1 to 29 (MEAEPPLYPMAGAAGPQGDEDLLGVPDGP). 5 helical membrane passes run 64–84 (VLAASAGGMLTYGVYLGLLQM), 110–130 (KMLMGINVTPIAALLYTPVLI), 132–152 (FFGTKWMMFLAVGIYALFVST), 160–180 (TLVPSAVALGMAIVPLWASMG), and 223–243 (IFYSFFHLSFACAQLPMIYFL). N-linked (GlcNAc...) asparagine glycans are attached at residues Asn-251 and Asn-272. The next 5 helical transmembrane spans lie at 285–305 (LIVVESVLMAVAFLAMLLVLG), 343–363 (LVPFFIYSGFEVLFACTGIAL), 378–398 (LLVAYSLGASAASLLGLLGLW), 403–423 (VPLVAGAGVHLLLTFILFFWA), and 428–448 (VLQHSWILYVAAALWGVGSAL). Asn-449 carries N-linked (GlcNAc...) asparagine glycosylation. 2 helical membrane passes run 469–489 (FIFTIYHWWQAVAIFTVYLGS) and 491–511 (LHMKAKLAVLLVTLVAAAVSY). The disordered stretch occupies residues 522 to 597 (VAPRQPRIPR…AQGGDGPEEQ (76 aa)). Phosphoserine occurs at positions 547 and 550.

This sequence belongs to the unc-93 family. In terms of assembly, interacts with TLR3, TLR5, TLR7, and TLR9 (probably via transmembrane domain). Post-translationally, N-glycosylated. As to expression, expressed in plasmocytoid dendritic cells (at protein level). Highly expressed in antigen-presenting cells. Expressed in heart, and at lower level in kidney. Expressed at low level in other tissues.

The protein resides in the endoplasmic reticulum membrane. The protein localises to the endosome. It is found in the lysosome. Its subcellular location is the cytoplasmic vesicle. It localises to the phagosome. Functionally, plays an important role in innate and adaptive immunity by regulating nucleotide-sensing Toll-like receptor (TLR) signaling. Required for the transport of a subset of TLRs (including TLR3, TLR7 and TLR9) from the endoplasmic reticulum to endolysosomes where they can engage pathogen nucleotides and activate signaling cascades. May play a role in autoreactive B-cells removal. The sequence is that of Protein unc-93 homolog B1 from Homo sapiens (Human).